A 506-amino-acid polypeptide reads, in one-letter code: Tubby protein homolog (506 aa).

The disordered stretch occupies residues 36 to 244 (QKQKKKRQEP…PSPTAPEQPV (209 aa)). 2 stretches are compositionally biased toward low complexity: residues 70–87 (LVES…QVQE) and 101–116 (PTAP…AATA). A compositionally biased stretch (acidic residues) spans 196 to 206 (FDEDEEDEEEN). Composition is skewed to low complexity over residues 207–221 (SSSS…RPSS) and 230–243 (EAAS…PEQP).

Belongs to the TUB family. In terms of assembly, interacts with GNAQ. Interacts with TULP1.

The protein localises to the cytoplasm. It is found in the nucleus. Its subcellular location is the secreted. It localises to the cell membrane. In terms of biological role, functions in signal transduction from heterotrimeric G protein-coupled receptors. Binds to membranes containing phosphatidylinositol 4,5-bisphosphate. Can bind DNA (in vitro). May contribute to the regulation of transcription in the nucleus. Could be involved in the hypothalamic regulation of body weight. Contribute to stimulation of phagocytosis of apoptotic retinal pigment epithelium (RPE) cells and macrophages. This is Tubby protein homolog (TUB) from Homo sapiens (Human).